Here is a 200-residue protein sequence, read N- to C-terminus: MTEVALIDAGGANLGSVRYALQRLGVEPRLVCDARGLEGAARVILPGVGSAPEAMARLNNQGLIEPLLRLQVPLIGICLGMQLLFEHSEEGDVPCLALLPGRVRRLTPAPSIRVPHMGWNRLLPLRASPLLAEVPEGASAYFVHSYAVPLTTAAVAACDHGGMFTAIVQQGVRCGAQFHPERSAETGARILRNFLEMDAA.

Residues 3–200 (EVALIDAGGA…LRNFLEMDAA (198 aa)) enclose the Glutamine amidotransferase type-1 domain. C78 acts as the Nucleophile in catalysis. Residues H179 and E181 contribute to the active site.

In terms of assembly, heterodimer of HisH and HisF.

The protein localises to the cytoplasm. The catalysed reaction is 5-[(5-phospho-1-deoxy-D-ribulos-1-ylimino)methylamino]-1-(5-phospho-beta-D-ribosyl)imidazole-4-carboxamide + L-glutamine = D-erythro-1-(imidazol-4-yl)glycerol 3-phosphate + 5-amino-1-(5-phospho-beta-D-ribosyl)imidazole-4-carboxamide + L-glutamate + H(+). The enzyme catalyses L-glutamine + H2O = L-glutamate + NH4(+). It functions in the pathway amino-acid biosynthesis; L-histidine biosynthesis; L-histidine from 5-phospho-alpha-D-ribose 1-diphosphate: step 5/9. IGPS catalyzes the conversion of PRFAR and glutamine to IGP, AICAR and glutamate. The HisH subunit catalyzes the hydrolysis of glutamine to glutamate and ammonia as part of the synthesis of IGP and AICAR. The resulting ammonia molecule is channeled to the active site of HisF. The polypeptide is Imidazole glycerol phosphate synthase subunit HisH (hisH) (Xylella fastidiosa (strain 9a5c)).